The sequence spans 149 residues: Large ribosomal subunit protein bL9 (149 aa).

The protein belongs to the bacterial ribosomal protein bL9 family.

Functionally, binds to the 23S rRNA. This chain is Large ribosomal subunit protein bL9, found in Aliivibrio fischeri (strain ATCC 700601 / ES114) (Vibrio fischeri).